The primary structure comprises 145 residues: Synaptojanin-2-binding protein (145 aa).

Over 1–117 (MNGRVDYLVT…GHRGEGDPSG (117 aa)) the chain is Cytoplasmic. The region spanning 13-100 (EINLTRGPSG…AVSLRVQHRL (88 aa)) is the PDZ domain. Residues 118–138 (IPIFMVLVPVFALTMVAAWAF) traverse the membrane as a helical segment. Residues 139-145 (MRYRQQL) are Mitochondrial intermembrane-facing.

Binds (via the PDZ domain) to isoform 2A of SYNJ2 (via the unique motif in the C-terminus). Interacts (via C-terminus) with RALBP1. Interacts (via PDZ domain) with ACVR2A (via C-terminus) and ACVR2B (via C-terminus). Forms a ternary complex with ACVR2A and RALBP1. Interacts with MAPK12. Interacts with DLL1; enhances DLL1 protein stability, and promotes notch signaling in endothelial cells.

It localises to the mitochondrion outer membrane. In terms of biological role, regulates endocytosis of activin type 2 receptor kinases through the Ral/RALBP1-dependent pathway and may be involved in suppression of activin-induced signal transduction. This Homo sapiens (Human) protein is Synaptojanin-2-binding protein (SYNJ2BP).